A 491-amino-acid chain; its full sequence is MANYFNTLNLRQQLAQLGKCRFMGRDEFADGASYLQGKKVVIVGCGAQGLNQGLNMRDSGLDISYALRKEAIAEKRASWRKATENGFKVGTYEELIPQADLVVNLTPDKQHSDVVRSVQPLMKDGAALGYSHGFNIVEVGEQIRKDITVVMVAPKCPGTEVREEYKRGFGVPTLIAVHPENDPKGEGMAIAKAWAAATGGHRAGVLESSFVAEVKSDLMGEQTILCGMLQAGSLLCFDKLVAEGTDPAYAEKLIQFGWENITEALKQGGITLMMDRLSNPAKLRAYALSEQLKEIMAPLFQKHMDDIISGEFSSGMMADWANDDKKLLTWREETGKTAFETAPQFEGKIGEQEYFDKGVLMIAMVKAGVELAFETMVDSGIIEESAYYESLHELPLIANTIARKRLYEMNVVISDTAEYGNYLFSYACVPLLKPFMAELQPGDLGSAIPEGAVDNAQLRDVNDAIRSHAIEQVGKKLRGYMTDMKRIAVAG.

One can recognise a KARI N-terminal Rossmann domain in the interval 15 to 208 (AQLGKCRFMG…GGHRAGVLES (194 aa)). NADP(+)-binding positions include 45–48 (CGAQ), R68, R76, S78, and 108–110 (DKQ). Residue H132 is part of the active site. G158 is an NADP(+) binding site. KARI C-terminal knotted domains lie at 209–344 (SFVA…TAPQ) and 345–484 (FEGK…MTDM). Residues D217, E221, E389, and E393 each coordinate Mg(2+). Position 414 (S414) interacts with substrate.

This sequence belongs to the ketol-acid reductoisomerase family. Requires Mg(2+) as cofactor.

It carries out the reaction (2R)-2,3-dihydroxy-3-methylbutanoate + NADP(+) = (2S)-2-acetolactate + NADPH + H(+). It catalyses the reaction (2R,3R)-2,3-dihydroxy-3-methylpentanoate + NADP(+) = (S)-2-ethyl-2-hydroxy-3-oxobutanoate + NADPH + H(+). It participates in amino-acid biosynthesis; L-isoleucine biosynthesis; L-isoleucine from 2-oxobutanoate: step 2/4. Its pathway is amino-acid biosynthesis; L-valine biosynthesis; L-valine from pyruvate: step 2/4. Functionally, involved in the biosynthesis of branched-chain amino acids (BCAA). Catalyzes an alkyl-migration followed by a ketol-acid reduction of (S)-2-acetolactate (S2AL) to yield (R)-2,3-dihydroxy-isovalerate. In the isomerase reaction, S2AL is rearranged via a Mg-dependent methyl migration to produce 3-hydroxy-3-methyl-2-ketobutyrate (HMKB). In the reductase reaction, this 2-ketoacid undergoes a metal-dependent reduction by NADPH to yield (R)-2,3-dihydroxy-isovalerate. The sequence is that of Ketol-acid reductoisomerase (NADP(+)) from Salmonella dublin (strain CT_02021853).